Consider the following 211-residue polypeptide: Histidine biosynthesis bifunctional protein HisIE (211 aa).

Positions 1-122 are phosphoribosyl-AMP cyclohydrolase; that stretch reads MSFKAAEVSS…DAQEESQMVW (122 aa). The tract at residues 123–211 is phosphoribosyl-ATP pyrophosphohydrolase; it reads LHQLEQLLAA…VVNKLKERHK (89 aa).

This sequence in the N-terminal section; belongs to the PRA-CH family. The protein in the C-terminal section; belongs to the PRA-PH family.

It is found in the cytoplasm. It carries out the reaction 1-(5-phospho-beta-D-ribosyl)-ATP + H2O = 1-(5-phospho-beta-D-ribosyl)-5'-AMP + diphosphate + H(+). The catalysed reaction is 1-(5-phospho-beta-D-ribosyl)-5'-AMP + H2O = 1-(5-phospho-beta-D-ribosyl)-5-[(5-phospho-beta-D-ribosylamino)methylideneamino]imidazole-4-carboxamide. It functions in the pathway amino-acid biosynthesis; L-histidine biosynthesis; L-histidine from 5-phospho-alpha-D-ribose 1-diphosphate: step 2/9. Its pathway is amino-acid biosynthesis; L-histidine biosynthesis; L-histidine from 5-phospho-alpha-D-ribose 1-diphosphate: step 3/9. This chain is Histidine biosynthesis bifunctional protein HisIE, found in Vibrio parahaemolyticus serotype O3:K6 (strain RIMD 2210633).